The primary structure comprises 70 residues: Large ribosomal subunit protein bL28 (70 aa).

It belongs to the bacterial ribosomal protein bL28 family.

The protein is Large ribosomal subunit protein bL28 of Maridesulfovibrio salexigens (strain ATCC 14822 / DSM 2638 / NCIMB 8403 / VKM B-1763) (Desulfovibrio salexigens).